A 597-amino-acid polypeptide reads, in one-letter code: uncharacterized protein (597 aa).

The 198-residue stretch at 378 to 575 folds into the VWFA domain; that stretch reads EVSFVVDNSG…YLPRELLRTL (198 aa).

This is an uncharacterized protein from Treponema pallidum (strain Nichols).